A 234-amino-acid chain; its full sequence is Transcriptional activator protein TraR (234 aa).

One can recognise an HTH luxR-type domain in the interval 167–232 (TAEDAAWLDP…HLTALAIKRK (66 aa)). Positions 191–210 (MEEIADVEEVKYNSVRVKLR) form a DNA-binding region, H-T-H motif.

This sequence belongs to the autoinducer-regulated transcriptional regulatory protein family.

In terms of biological role, positive regulation of conjugal transfer of Ti plasmids. This chain is Transcriptional activator protein TraR (traR), found in Agrobacterium vitis (Rhizobium vitis).